Reading from the N-terminus, the 448-residue chain is Phosphoglucosamine mutase (448 aa).

Serine 100 (phosphoserine intermediate) is an active-site residue. Serine 100, aspartate 240, aspartate 242, and aspartate 244 together coordinate Mg(2+). Serine 100 carries the post-translational modification Phosphoserine.

This sequence belongs to the phosphohexose mutase family. It depends on Mg(2+) as a cofactor. In terms of processing, activated by phosphorylation.

It catalyses the reaction alpha-D-glucosamine 1-phosphate = D-glucosamine 6-phosphate. Catalyzes the conversion of glucosamine-6-phosphate to glucosamine-1-phosphate. In Clostridioides difficile (strain 630) (Peptoclostridium difficile), this protein is Phosphoglucosamine mutase.